Consider the following 145-residue polypeptide: MSQKAIKGYINLIIPAGGATPAPPIGPALGQRKVNIKTFCDEFNNSTKDMDKGVPLPTLITVYEDSSFSFKIKTPPASYFLKKYAKITKGSSATKKEAVVGKVTMDDCREIAKLKMPDLNTKDIEAATKIICGSAASMGLEVVGN.

It belongs to the universal ribosomal protein uL11 family. In terms of assembly, part of the ribosomal stalk of the 50S ribosomal subunit. Interacts with L10 and the large rRNA to form the base of the stalk. L10 forms an elongated spine to which L12 dimers bind in a sequential fashion forming a multimeric L10(L12)X complex. In terms of processing, one or more lysine residues are methylated.

Functionally, forms part of the ribosomal stalk which helps the ribosome interact with GTP-bound translation factors. This Rickettsia akari (strain Hartford) protein is Large ribosomal subunit protein uL11.